A 570-amino-acid chain; its full sequence is Cytoplasmic polyadenylation element-binding protein 2 (570 aa).

One can recognise an RRM domain in the interval 434-516; it reads LVAFIGGVPR…KRVEIKPYFF (83 aa).

Expressed specifically in the spermatogenic germ line.

Its function is as follows. Cytoplasmic polyadenylation element binding protein that binds to and regulates the translation of specific mRNAs. Not required for oogenesis. This chain is Cytoplasmic polyadenylation element-binding protein 2 (cpb-2), found in Caenorhabditis elegans.